We begin with the raw amino-acid sequence, 657 residues long: Penicillin-binding protein activator LpoA (657 aa).

The N-terminal stretch at methionine 1–alanine 25 is a signal peptide. Cysteine 26 carries the N-palmitoyl cysteine lipid modification. The S-diacylglycerol cysteine moiety is linked to residue cysteine 26.

This sequence belongs to the LpoA family. As to quaternary structure, interacts with PBP1a.

Its subcellular location is the cell outer membrane. Regulator of peptidoglycan synthesis that is essential for the function of penicillin-binding protein 1A (PBP1a). The sequence is that of Penicillin-binding protein activator LpoA from Yersinia pseudotuberculosis serotype O:1b (strain IP 31758).